Consider the following 335-residue polypeptide: 3-ketodihydrosphingosine reductase TSC10 (335 aa).

Glycine 42, serine 44, serine 45, glycine 46, arginine 67, aspartate 68, lysine 71, aspartate 95, and leucine 96 together coordinate NADPH. Positions 42-46 (GGSSG) match the GXSXG motif. The interval 141 to 207 (LKDGLDGVYW…RGLSDALRSE (67 aa)) is involved in homodimer formation. The active-site Proton acceptor is tyrosine 190. Tyrosine 190, lysine 194, and isoleucine 223 together coordinate NADP(+). The active-site Lowers pKa of active site Tyr is lysine 194. A helical transmembrane segment spans residues 288–308 (TNNFLLDTLWLIVSSVGVPIW).

It belongs to the short-chain dehydrogenases/reductases (SDR) family. As to quaternary structure, homodimer; a minor portion forms homotetramers.

The protein localises to the endoplasmic reticulum membrane. It catalyses the reaction sphinganine + NADP(+) = 3-oxosphinganine + NADPH + H(+). Its pathway is lipid metabolism; sphingolipid metabolism. Functionally, catalyzes the reduction of 3'-oxosphinganine (3-ketodihydrosphingosine/KDS) to sphinganine (dihydrosphingosine/DHS), the second step of de novo sphingolipid biosynthesis. This chain is 3-ketodihydrosphingosine reductase TSC10 (TSC10), found in Cryptococcus neoformans var. neoformans serotype D (strain JEC21 / ATCC MYA-565) (Filobasidiella neoformans).